A 288-amino-acid polypeptide reads, in one-letter code: Diaminopimelate epimerase (288 aa).

Positions 13, 46, and 66 each coordinate substrate. Residue cysteine 75 is the Proton donor of the active site. Substrate is bound by residues 76 to 77 (GN), asparagine 166, asparagine 199, and 217 to 218 (ER). Cysteine 226 functions as the Proton acceptor in the catalytic mechanism. Position 227–228 (227–228 (GT)) interacts with substrate.

Belongs to the diaminopimelate epimerase family. As to quaternary structure, homodimer.

The protein resides in the cytoplasm. It carries out the reaction (2S,6S)-2,6-diaminopimelate = meso-2,6-diaminopimelate. The protein operates within amino-acid biosynthesis; L-lysine biosynthesis via DAP pathway; DL-2,6-diaminopimelate from LL-2,6-diaminopimelate: step 1/1. Functionally, catalyzes the stereoinversion of LL-2,6-diaminopimelate (L,L-DAP) to meso-diaminopimelate (meso-DAP), a precursor of L-lysine and an essential component of the bacterial peptidoglycan. The protein is Diaminopimelate epimerase of Cupriavidus metallidurans (strain ATCC 43123 / DSM 2839 / NBRC 102507 / CH34) (Ralstonia metallidurans).